The chain runs to 532 residues: Protein tweety homolog 2 (532 aa).

Residues 1-44 are Extracellular-facing; it reads MPAARVEYIAPWWVVWLHSVPHLGLRLQRVDSTFSPGDETYQES. The helical transmembrane segment at 45–65 threads the bilayer; it reads LLFLGVLAAIGLGLNLIFLTV. Residues 66-87 lie on the Cytoplasmic side of the membrane; that stretch reads YLVCTCCCRRDHTVQTKQQESC. The chain crosses the membrane as a helical span at residues 88–108; sequence CVTWTAVVAGLLCCAAVGVGF. The Extracellular portion of the chain corresponds to 109–213; it reads YGNSETNDGM…QTAYVEYYRW (105 aa). Ca(2+)-binding residues include E113 and D116. Residue N129 is glycosylated (N-linked (GlcNAc...) asparagine). The RGD signature appears at 164–166; the sequence is RGD. A Phosphothreonine modification is found at T199. Residues 214–234 traverse the membrane as a helical segment; sequence LSYLLLFILDLVICLVTCLGL. Residues 235–240 are Cytoplasmic-facing; it reads ARRSKC. Residues 241–261 traverse the membrane as a helical segment; the sequence is LLASMLCCGILTLILSWASLA. At 262 to 385 the chain is on the extracellular side; sequence ADAAAAVGTS…DALTGICYDG (124 aa). Cystine bridges form between C274-C382 and C300-C367. 2 N-linked (GlcNAc...) asparagine glycosylation sites follow: N283 and N352. The chain crosses the membrane as a helical span at residues 386 to 406; it reads IEGLLFLGLFSLLAALAFSTL. The Cytoplasmic portion of the chain corresponds to 407–532; that stretch reads TCAGPRAWKY…EHLRHYEFPS (126 aa). S504 bears the Phosphoserine mark. A PY-motif; mediates interaction with NEDD4L motif is present at residues 506–509; the sequence is PPTY.

This sequence belongs to the tweety family. As to quaternary structure, forms cis-homodimers in the presence of Ca(+2) and forms monomers and trans-dimers in the absence of Ca(2+). Interacts with NEDD4L. Post-translationally, ubiquitinated by NEDD4L, leading to its proteasomal degradation.

It localises to the cell membrane. It catalyses the reaction chloride(in) = chloride(out). It carries out the reaction L-glutamate(out) = L-glutamate(in). Its activity is regulated as follows. Inhibited by (4-[(2-butyl-6,7-dichloro-2- cyclopentyl-2,3-dihydro-1-oxo-1H-inden-5-yl)oxy]butanoic acid). Calcium-independent, swelling-dependent volume-regulated anion channel (VRAC-swell) which plays a pivotal role in the process of regulatory volume decrease (RVD) in the brain through the efflux of anions like chloride and organic osmolytes like glutamate. Probable large-conductance Ca(2+)-activated chloride channel. The polypeptide is Protein tweety homolog 2 (Ttyh2) (Mus musculus (Mouse)).